Consider the following 519-residue polypeptide: Galactan beta-1,4-galactosyltransferase GALS2 (519 aa).

The helical transmembrane segment at 28–48 threads the bilayer; sequence LALMALLVLCTLATLLPFLPS. The GT92 domain occupies 257–471; the sequence is DYLYCGSSLY…YHGSISQRRE (215 aa).

This sequence belongs to the glycosyltransferase 92 family. Expressed in the midrib of mature leaves, root vasculature, flower filaments, siliques and seeds.

The protein localises to the golgi apparatus membrane. In terms of biological role, involved in the biosynthesis of beta-1,4-galactan. Beta-1,4-galactans are abundant polysaccharides in plant cell walls and are found as side-chain of rhamnogalacturonan I, which is a major component of pectin. This is Galactan beta-1,4-galactosyltransferase GALS2 from Arabidopsis thaliana (Mouse-ear cress).